We begin with the raw amino-acid sequence, 158 residues long: Ribosome maturation factor RimP (158 aa).

The protein belongs to the RimP family.

The protein localises to the cytoplasm. Its function is as follows. Required for maturation of 30S ribosomal subunits. In Leuconostoc citreum (strain KM20), this protein is Ribosome maturation factor RimP.